An 83-amino-acid polypeptide reads, in one-letter code: MPKADIHPTWYPEAKVICNGEVVMTVGSTQPEIHVEVWSGNHPFYTGTQKMIDTEGRVDRFLRKYGMIDKNKKKNQASDAKEK.

It belongs to the bacterial ribosomal protein bL31 family. Type A subfamily. As to quaternary structure, part of the 50S ribosomal subunit.

In terms of biological role, binds the 23S rRNA. This chain is Large ribosomal subunit protein bL31, found in Gloeothece citriformis (strain PCC 7424) (Cyanothece sp. (strain PCC 7424)).